Reading from the N-terminus, the 103-residue chain is UPF0145 protein BC_1816 (103 aa).

It belongs to the UPF0145 family.

The polypeptide is UPF0145 protein BC_1816 (Bacillus cereus (strain ATCC 14579 / DSM 31 / CCUG 7414 / JCM 2152 / NBRC 15305 / NCIMB 9373 / NCTC 2599 / NRRL B-3711)).